A 102-amino-acid chain; its full sequence is Large ribosomal subunit protein bL21 (102 aa).

It belongs to the bacterial ribosomal protein bL21 family. Part of the 50S ribosomal subunit. Contacts protein L20.

Functionally, this protein binds to 23S rRNA in the presence of protein L20. The sequence is that of Large ribosomal subunit protein bL21 from Bacillus cytotoxicus (strain DSM 22905 / CIP 110041 / 391-98 / NVH 391-98).